Here is a 429-residue protein sequence, read N- to C-terminus: Histidine--tRNA ligase (429 aa).

The protein belongs to the class-II aminoacyl-tRNA synthetase family. In terms of assembly, homodimer.

It is found in the cytoplasm. The catalysed reaction is tRNA(His) + L-histidine + ATP = L-histidyl-tRNA(His) + AMP + diphosphate + H(+). This Pseudomonas syringae pv. tomato (strain ATCC BAA-871 / DC3000) protein is Histidine--tRNA ligase.